The following is a 126-amino-acid chain: Small ribosomal subunit protein uS13 (126 aa).

A disordered region spans residues 94-126; the sequence is RGLPVHGQRTSTNARTRKGPRRAIAGKKKPGKK. The segment covering 108–126 has biased composition (basic residues); it reads RTRKGPRRAIAGKKKPGKK.

The protein belongs to the universal ribosomal protein uS13 family. Part of the 30S ribosomal subunit. Forms a loose heterodimer with protein S19. Forms two bridges to the 50S subunit in the 70S ribosome.

In terms of biological role, located at the top of the head of the 30S subunit, it contacts several helices of the 16S rRNA. In the 70S ribosome it contacts the 23S rRNA (bridge B1a) and protein L5 of the 50S subunit (bridge B1b), connecting the 2 subunits; these bridges are implicated in subunit movement. Contacts the tRNAs in the A and P-sites. The protein is Small ribosomal subunit protein uS13 of Streptomyces avermitilis (strain ATCC 31267 / DSM 46492 / JCM 5070 / NBRC 14893 / NCIMB 12804 / NRRL 8165 / MA-4680).